A 96-amino-acid polypeptide reads, in one-letter code: Defensin-like protein 151 (96 aa).

Residues 1–29 (MKKPSQLSATILTIFVILAIGVMVKETLG) form the signal peptide. Cystine bridges form between Cys-35–Cys-88, Cys-48–Cys-68, Cys-53–Cys-82, and Cys-57–Cys-84.

This sequence belongs to the DEFL family.

It is found in the secreted. This chain is Defensin-like protein 151 (LCR17), found in Arabidopsis thaliana (Mouse-ear cress).